A 217-amino-acid polypeptide reads, in one-letter code: Probable transaldolase (217 aa).

Residue Lys-83 is the Schiff-base intermediate with substrate of the active site.

The protein belongs to the transaldolase family. Type 3B subfamily.

The protein resides in the cytoplasm. The enzyme catalyses D-sedoheptulose 7-phosphate + D-glyceraldehyde 3-phosphate = D-erythrose 4-phosphate + beta-D-fructose 6-phosphate. The protein operates within carbohydrate degradation; pentose phosphate pathway; D-glyceraldehyde 3-phosphate and beta-D-fructose 6-phosphate from D-ribose 5-phosphate and D-xylulose 5-phosphate (non-oxidative stage): step 2/3. Its function is as follows. Transaldolase is important for the balance of metabolites in the pentose-phosphate pathway. The chain is Probable transaldolase from Ruegeria sp. (strain TM1040) (Silicibacter sp.).